We begin with the raw amino-acid sequence, 103 residues long: Cysteine-rich and transmembrane domain-containing protein 1 (103 aa).

The segment covering 1–45 (MNQGNPPPYPGPGPTAPYPPYPSQPMGPGFYPPGPPGGPYPPPQG) has biased composition (pro residues). The disordered stretch occupies residues 1–66 (MNQGNPPPYP…WQGGPQEPPK (66 aa)). A compositionally biased stretch (low complexity) spans 46 to 56 (GYPYQGYPQYG). The helical transmembrane segment at 80–97 (LGTSTCLTACWTALCCCC) threads the bilayer.

It belongs to the CYSTM1 family.

The protein localises to the membrane. This chain is Cysteine-rich and transmembrane domain-containing protein 1 (CYSTM1), found in Bos taurus (Bovine).